The following is a 154-amino-acid chain: Movement protein (154 aa).

Disordered stretches follow at residues 83–103 (SSPTTFTRSQTSRLSLSHTRP) and 123–154 (WVATLTHSPSQNQQPKPSPPNRLTGRNSGRVR).

This sequence belongs to the luteoviruses movement protein family.

Transports viral genome to neighboring plant cells directly through plasmosdesmata, without any budding. The movement protein allows efficient cell to cell propagation, by bypassing the host cell wall barrier. This Barley yellow dwarf virus (isolate MAV) (BYDV) protein is Movement protein.